The chain runs to 629 residues: Sushi domain-containing protein 5 (629 aa).

A signal peptide spans 1–35 (MTAEGPSPPARWHRRLPGLWAAALLLLGLPRLSVR). Residues 36-574 (ADGKFFVLES…DGCPGLSRGP (539 aa)) are Extracellular-facing. Residues 39-134 (KFFVLESQNG…GGTYSALCIK (96 aa)) enclose the Link domain. 3 cysteine pairs are disulfide-bonded: cysteine 61/cysteine 132, cysteine 140/cysteine 184, and cysteine 167/cysteine 197. In terms of domain architecture, Sushi spans 138–199 (KPCGDPPSFP…WYGLVQACGK (62 aa)). Residues 225-249 (EDSRTEADEDRGQGDSSEEAPKQDR) show a composition bias toward basic and acidic residues. Disordered stretches follow at residues 225–252 (EDSR…RLVS) and 344–403 (DGPS…GLDE). A helical membrane pass occupies residues 575-595 (VIATIVTVLCLLLLLAGVGMV). At 596-629 (WGYRKCQHKSSVYKLNVGQRQARHYHQQIEMEKV) the chain is on the cytoplasmic side.

The protein resides in the membrane. This chain is Sushi domain-containing protein 5 (SUSD5), found in Homo sapiens (Human).